A 612-amino-acid chain; its full sequence is Dihydroxy-acid dehydratase (612 aa).

Asp81 is a Mg(2+) binding site. Cys122 lines the [2Fe-2S] cluster pocket. Mg(2+) contacts are provided by Asp123 and Lys124. The residue at position 124 (Lys124) is an N6-carboxylysine. Cys193 contacts [2Fe-2S] cluster. Glu489 serves as a coordination point for Mg(2+). Residue Ser515 is the Proton acceptor of the active site.

This sequence belongs to the IlvD/Edd family. In terms of assembly, homodimer. [2Fe-2S] cluster is required as a cofactor. Requires Mg(2+) as cofactor.

It carries out the reaction (2R)-2,3-dihydroxy-3-methylbutanoate = 3-methyl-2-oxobutanoate + H2O. The catalysed reaction is (2R,3R)-2,3-dihydroxy-3-methylpentanoate = (S)-3-methyl-2-oxopentanoate + H2O. Its pathway is amino-acid biosynthesis; L-isoleucine biosynthesis; L-isoleucine from 2-oxobutanoate: step 3/4. It functions in the pathway amino-acid biosynthesis; L-valine biosynthesis; L-valine from pyruvate: step 3/4. Functionally, functions in the biosynthesis of branched-chain amino acids. Catalyzes the dehydration of (2R,3R)-2,3-dihydroxy-3-methylpentanoate (2,3-dihydroxy-3-methylvalerate) into 2-oxo-3-methylpentanoate (2-oxo-3-methylvalerate) and of (2R)-2,3-dihydroxy-3-methylbutanoate (2,3-dihydroxyisovalerate) into 2-oxo-3-methylbutanoate (2-oxoisovalerate), the penultimate precursor to L-isoleucine and L-valine, respectively. The chain is Dihydroxy-acid dehydratase from Xanthomonas oryzae pv. oryzae (strain MAFF 311018).